The sequence spans 206 residues: 3-isopropylmalate dehydratase small subunit (206 aa).

The protein belongs to the LeuD family. LeuD type 1 subfamily. In terms of assembly, heterodimer of LeuC and LeuD.

The catalysed reaction is (2R,3S)-3-isopropylmalate = (2S)-2-isopropylmalate. Its pathway is amino-acid biosynthesis; L-leucine biosynthesis; L-leucine from 3-methyl-2-oxobutanoate: step 2/4. In terms of biological role, catalyzes the isomerization between 2-isopropylmalate and 3-isopropylmalate, via the formation of 2-isopropylmaleate. This Leptospira interrogans serogroup Icterohaemorrhagiae serovar copenhageni (strain Fiocruz L1-130) protein is 3-isopropylmalate dehydratase small subunit.